The primary structure comprises 137 residues: MLTISNNVHLPDAEIELTYIRAQGAGGQNVNKVSSAVHLRFDIPASSLPEFYKERLLALRDSRITGDGVLIIKAQQYRTQDQNRADALARLAELIIAAGKTEKKRRPTKPTLGSKTRRLEGKARRSTVKAGRGKVDF.

The interval 102 to 137 is disordered; sequence EKKRRPTKPTLGSKTRRLEGKARRSTVKAGRGKVDF.

It belongs to the prokaryotic/mitochondrial release factor family. As to quaternary structure, associated with 70S ribosomes and polysomes.

The protein localises to the cytoplasm. The catalysed reaction is an N-acyl-L-alpha-aminoacyl-tRNA + H2O = an N-acyl-L-amino acid + a tRNA + H(+). Functionally, rescues stalled ribosomes. Can hydrolyze peptidyl-tRNA on ribosomes stalled by both non-stop mRNAs and mRNAs that contain rare codon clusters. This is Peptidyl-tRNA hydrolase ArfB (arfB) from Pseudomonas putida (Arthrobacter siderocapsulatus).